Consider the following 423-residue polypeptide: Serine--tRNA ligase (423 aa).

Basic and acidic residues-rich tracts occupy residues 1-24 and 62-71; these read MIDLKQLRDDPDRVRESQRTRGED and KMRDASPEEK. The segment at 1 to 71 is disordered; that stretch reads MIDLKQLRDD…KMRDASPEEK (71 aa). Residue 230-232 participates in L-serine binding; it reads TSE. ATP contacts are provided by residues 261–263 and Val-277; that span reads RRE. Glu-284 contributes to the L-serine binding site. 348-351 lines the ATP pocket; the sequence is ELTS. L-serine is bound at residue Thr-383.

The protein belongs to the class-II aminoacyl-tRNA synthetase family. Type-1 seryl-tRNA synthetase subfamily. Homodimer. The tRNA molecule binds across the dimer.

The protein resides in the cytoplasm. The enzyme catalyses tRNA(Ser) + L-serine + ATP = L-seryl-tRNA(Ser) + AMP + diphosphate + H(+). The catalysed reaction is tRNA(Sec) + L-serine + ATP = L-seryl-tRNA(Sec) + AMP + diphosphate + H(+). It participates in aminoacyl-tRNA biosynthesis; selenocysteinyl-tRNA(Sec) biosynthesis; L-seryl-tRNA(Sec) from L-serine and tRNA(Sec): step 1/1. Functionally, catalyzes the attachment of serine to tRNA(Ser). Is also able to aminoacylate tRNA(Sec) with serine, to form the misacylated tRNA L-seryl-tRNA(Sec), which will be further converted into selenocysteinyl-tRNA(Sec). The chain is Serine--tRNA ligase from Corynebacterium kroppenstedtii (strain DSM 44385 / JCM 11950 / CIP 105744 / CCUG 35717).